We begin with the raw amino-acid sequence, 604 residues long: Elongation factor 4 (604 aa).

Residues lysine 8–asparagine 190 enclose the tr-type G domain. Residues aspartate 20–threonine 25 and asparagine 137–aspartate 140 each bind GTP.

It belongs to the TRAFAC class translation factor GTPase superfamily. Classic translation factor GTPase family. LepA subfamily.

The protein resides in the cell inner membrane. The enzyme catalyses GTP + H2O = GDP + phosphate + H(+). Functionally, required for accurate and efficient protein synthesis under certain stress conditions. May act as a fidelity factor of the translation reaction, by catalyzing a one-codon backward translocation of tRNAs on improperly translocated ribosomes. Back-translocation proceeds from a post-translocation (POST) complex to a pre-translocation (PRE) complex, thus giving elongation factor G a second chance to translocate the tRNAs correctly. Binds to ribosomes in a GTP-dependent manner. This chain is Elongation factor 4, found in Fusobacterium nucleatum subsp. nucleatum (strain ATCC 25586 / DSM 15643 / BCRC 10681 / CIP 101130 / JCM 8532 / KCTC 2640 / LMG 13131 / VPI 4355).